Reading from the N-terminus, the 534-residue chain is Prolyl 4-hydroxylase subunit alpha-1 (534 aa).

A signal peptide spans 1–17 (MIWYILVVGILLPQSLA). An N-linked (GlcNAc...) asparagine glycan is attached at asparagine 113. One copy of the TPR repeat lies at 205 to 238 (VSVLDYLSYAVYQQGDLDKALLLTKKLLELDPEH). A disordered region spans residues 258–277 (ANKSSSDDQSDQKTTLKKKG). Residue asparagine 259 is glycosylated (N-linked (GlcNAc...) asparagine). A Fe2OG dioxygenase domain is found at 411–519 (TAEELQVANY…KWVSNKWLHE (109 aa)). Residues histidine 429, aspartate 431, and histidine 500 each contribute to the Fe cation site. Lysine 510 lines the 2-oxoglutarate pocket.

This sequence belongs to the P4HA family. In terms of assembly, heterotetramer of two alpha-1 chains and two beta chains (P4HB)(the beta chain is the multi-functional PDI), where P4HB plays the role of a structural subunit; this tetramer catalyzes the formation of 4-hydroxyproline in collagen. Fe(2+) is required as a cofactor. Requires L-ascorbate as cofactor.

It localises to the endoplasmic reticulum lumen. The enzyme catalyses L-prolyl-[collagen] + 2-oxoglutarate + O2 = trans-4-hydroxy-L-prolyl-[collagen] + succinate + CO2. Catalyzes the post-translational formation of 4-hydroxyproline in -Xaa-Pro-Gly- sequences in collagens and other proteins. This chain is Prolyl 4-hydroxylase subunit alpha-1 (P4HA1), found in Bos taurus (Bovine).